The sequence spans 970 residues: Insulin-degrading enzyme-like 1, peroxisomal (970 aa).

H69 is a Zn(2+) binding site. E72 acts as the Proton acceptor in catalysis. H73 contacts Zn(2+). E143 is an active-site residue. E150 serves as a coordination point for Zn(2+).

It belongs to the peptidase M16 family. It depends on Zn(2+) as a cofactor.

It localises to the peroxisome. Its function is as follows. Peptidase that might be involved in pathogen or wound response. Not required for peroxisome biogenesis, indole-3-butyric acid (IBA) metabolism, fatty acid beta-oxidation or degradation of glyoxylate cycle enzymes during seedling development. This Arabidopsis thaliana (Mouse-ear cress) protein is Insulin-degrading enzyme-like 1, peroxisomal (PXM16).